The following is a 542-amino-acid chain: N-substituted formamide deformylase (542 aa).

A propeptide spanning residues 1–2 (MT) is cleaved from the precursor.

Homodimer. Zn(2+) is required as a cofactor.

The enzyme catalyses N-benzylformamide + H2O = benzylamine + formate. Completely inhibited by HgCl(2), CuCl, CuCl(2) and AgNO(3). Partially inhibited by ZnCl(2) and SnCl(2). Almost completely inhibited by the reducing reagent DTT. Partially inhibited by phenylhydrazine. Moderately inhibited by phenanthroline and 8-hydroxyquinoline. Completely inhibited by the thiol-specific inhibitors N-ethylmaleimide and p-chloromercuribenzoate. Not inhibited by the carbonyl-specific inhibitors aminoguanidine and semicarbazide, the chelating agents alpha,alpha'-dipyridyl, KCN, diethyldithiocarbamate and EDTA, or the oxidizing reagents and serine-modifying reagents such as H(2)O(2), ammonium persulfate, phenylmethanesulfonyl fluoride and diisopropyl fluorophosphates. Hydrolyzes N-substituted formamides, but not amides. N-benzylformamide is the preferred substrate, while N-butylformamide is hydrolyzed at a much lower rate. Has very low activity towards allylformamide, N-(2-cyclohex-1-enylethyl)formamide and N-(alpha-methylbenzyl)formamide. The polypeptide is N-substituted formamide deformylase (Arthrobacter pascens).